A 1154-amino-acid polypeptide reads, in one-letter code: MVYPVQCGPRERWTFARIQEVMDMPNLIEIQQNSYRWFLEEGLREMFRDISPIQDFTGNLILEFIDYALGEPKYSVEECKERDVTFAAPLRVKVRLINKETGEVKEQEVFMGDFPLMTDKGTFIINGAERVIVSQLVRSPGVYYNEAIDPPSGKKLFGATIIPNRGAWLEFETDINDNIFVRIDRTRKLPATVLIRALGYSNNAQVQELFDGDERIRITLERDNTENTEEALVEIYKRLRPGEPPTVDSARSLLETLFFDPKRYDLAKVGRYKINKRLGISVEREVRHLTKDDIIAAIRELLKLMQGDGRADDIDHLGNRRLRSVGELLQNQFRIGLSRMERVVRERMTIQDVEVITPQVLINIRPVVAAIKEFFGSSQLSQFMDQTNPLAELTHKRRLSALGPGGLSRERAGFEVRDVHHSHYGRMCPIETPEGPNIGLIGSLSTFARINEYGFIETPYRKVDKERGVVTDQIDYLTADEEDKYIVAQANAPLDEEGRFKEKRVNARHGHDILVVPVEKVDYMDVSPKQVVSIATALIPFLEHDDANRALMGANMQRQAVPLLRTDAPYVGTGMEFKAAYDSGVCAIARKAGYVERVTGDEILIRCDDGTTEHHKLLKFLRSNQGTCINQKPICHKGQRIEAGQIIADGPSTDQGELALGRNVLVAFMTWEGYNYEDAILVNEKLVKEDYFTSIHIEEYECDSRDTKLGPEEITRDIPNVGEEVLKDLDDRGIIRVGAEVRPGDILVGKVTPKGETELTAEERLLRAIFGEKAREVRDTSLRVPHGEAGKIVDVKVFSRENGDELAPGVNQLVRVYIAQKRKISEGDKMAGRHGNKGVISRIMPEADMPYLPDGTPVEIVLNPLGVPSRMNIGQILETHLGWASKHMDRGVLIEGKPSGEKGIRVATPVFDGATEDDIFEFLTKAGLPKANEIALTDTRTESLRESMAAVPLGKSILYDGRTGEPFDNPITVGYMYMLKLAHLVDDKIHARSTGPYSLVTQQPLGGKAQFGGQRFGEMEVWALEAYGAAYTLQEILTVKSDDVVGRVKTYEAIVKGENIPEPGVPESFKVLIKELQSLGLDVKILSEDEREIEIKEVEEDVAETAKELGIDIQGEDRSERAGEPASPDEMDDEEEIDYAAGFLQDALEELEED.

The segment covering 1108-1123 (ELGIDIQGEDRSERAG) has biased composition (basic and acidic residues). Positions 1108–1136 (ELGIDIQGEDRSERAGEPASPDEMDDEEE) are disordered. The segment covering 1127-1136 (SPDEMDDEEE) has biased composition (acidic residues).

This sequence belongs to the RNA polymerase beta chain family. As to quaternary structure, the RNAP catalytic core consists of 2 alpha, 1 beta, 1 beta' and 1 omega subunit. When a sigma factor is associated with the core the holoenzyme is formed, which can initiate transcription.

It carries out the reaction RNA(n) + a ribonucleoside 5'-triphosphate = RNA(n+1) + diphosphate. Its function is as follows. DNA-dependent RNA polymerase catalyzes the transcription of DNA into RNA using the four ribonucleoside triphosphates as substrates. The polypeptide is DNA-directed RNA polymerase subunit beta (Heliobacterium modesticaldum (strain ATCC 51547 / Ice1)).